Reading from the N-terminus, the 358-residue chain is Phospho-N-acetylmuramoyl-pentapeptide-transferase (358 aa).

10 consecutive transmembrane segments (helical) span residues 26–46 (TIYA…WIIR), 71–91 (TPTM…LLWA), 93–113 (LTNV…LIGF), 134–154 (MFWQ…TPGF), 170–190 (LGIF…NAVN), 197–217 (GLAI…AYVA), 234–254 (AGEL…FLWF), 261–281 (VFMG…IAVL), 286–306 (ILLV…IFQV), and 335–355 (KIIV…ISTL).

Belongs to the glycosyltransferase 4 family. MraY subfamily. The cofactor is Mg(2+).

It is found in the cell inner membrane. It carries out the reaction UDP-N-acetyl-alpha-D-muramoyl-L-alanyl-gamma-D-glutamyl-meso-2,6-diaminopimeloyl-D-alanyl-D-alanine + di-trans,octa-cis-undecaprenyl phosphate = di-trans,octa-cis-undecaprenyl diphospho-N-acetyl-alpha-D-muramoyl-L-alanyl-D-glutamyl-meso-2,6-diaminopimeloyl-D-alanyl-D-alanine + UMP. It functions in the pathway cell wall biogenesis; peptidoglycan biosynthesis. Functionally, catalyzes the initial step of the lipid cycle reactions in the biosynthesis of the cell wall peptidoglycan: transfers peptidoglycan precursor phospho-MurNAc-pentapeptide from UDP-MurNAc-pentapeptide onto the lipid carrier undecaprenyl phosphate, yielding undecaprenyl-pyrophosphoryl-MurNAc-pentapeptide, known as lipid I. The chain is Phospho-N-acetylmuramoyl-pentapeptide-transferase from Trichlorobacter lovleyi (strain ATCC BAA-1151 / DSM 17278 / SZ) (Geobacter lovleyi).